A 289-amino-acid chain; its full sequence is Light-independent protochlorophyllide reductase iron-sulfur ATP-binding protein (289 aa).

ATP-binding positions include 10–15 (GIGKST) and Lys-39. Ser-14 is a Mg(2+) binding site. The [4Fe-4S] cluster site is built by Cys-95 and Cys-129. 180–181 (NR) lines the ATP pocket.

Belongs to the NifH/BchL/ChlL family. As to quaternary structure, homodimer. Protochlorophyllide reductase is composed of three subunits; ChlL, ChlN and ChlB. [4Fe-4S] cluster is required as a cofactor.

Its subcellular location is the plastid. It is found in the chloroplast. It carries out the reaction chlorophyllide a + oxidized 2[4Fe-4S]-[ferredoxin] + 2 ADP + 2 phosphate = protochlorophyllide a + reduced 2[4Fe-4S]-[ferredoxin] + 2 ATP + 2 H2O. The protein operates within porphyrin-containing compound metabolism; chlorophyll biosynthesis (light-independent). Component of the dark-operative protochlorophyllide reductase (DPOR) that uses Mg-ATP and reduced ferredoxin to reduce ring D of protochlorophyllide (Pchlide) to form chlorophyllide a (Chlide). This reaction is light-independent. The L component serves as a unique electron donor to the NB-component of the complex, and binds Mg-ATP. This Marchantia polymorpha (Common liverwort) protein is Light-independent protochlorophyllide reductase iron-sulfur ATP-binding protein.